We begin with the raw amino-acid sequence, 896 residues long: Myelin regulatory factor-like protein (896 aa).

Residues 111–403 constitute a DNA-binding region (NDT80); sequence GLPHRTFHNC…SNPGQFENDI (293 aa). In terms of domain architecture, Peptidase S74 spans 449 to 557; it reads SDSRAKQNVQ…KLTNNLEERI (109 aa). A coiled-coil region spans residues 541 to 573; that stretch reads GAVKQLCKLTNNLEERIEELEIWNRKLARLKRL. The chain crosses the membrane as a helical span at residues 622–638; the sequence is VFQSLVITLIAVMAFCL. The span at 648–658 shows a compositional bias: polar residues; the sequence is APSSNLTSSQE. Residues 648 to 672 form a disordered region; that stretch reads APSSNLTSSQEPALPSTASPSAPNT. Over residues 659-672 the composition is skewed to low complexity; it reads PALPSTASPSAPNT.

It belongs to the MRF family.

It localises to the membrane. In Bos taurus (Bovine), this protein is Myelin regulatory factor-like protein (MYRFL).